Consider the following 82-residue polypeptide: U7-hexatoxin-Mg1a (82 aa).

Residues 1–26 (MRTIVFLIVSILLLSSAVLMLAEGNA) form the signal peptide. Residues 27–44 (ASHELQEYPIEESLEEQR) constitute a propeptide that is removed on maturation. Intrachain disulfides connect cysteine 46–cysteine 62, cysteine 51–cysteine 67, cysteine 61–cysteine 77, and cysteine 69–cysteine 75. Position 80 is an arginine amide (arginine 80).

It belongs to the rTX family. In terms of tissue distribution, expressed by the venom gland.

The protein resides in the secreted. Induces flaccid paralysis when injected into lepidopteran larvae. Intracranial injection into mice causes awkwardness of movement and laboured respiration until death. The polypeptide is U7-hexatoxin-Mg1a (Macrothele gigas (Japanese funnel web spider)).